Here is a 248-residue protein sequence, read N- to C-terminus: tRNA (guanine-N(7)-)-methyltransferase (248 aa).

S-adenosyl-L-methionine contacts are provided by residues Gly-70, 93–94 (EI), 129–130 (NA), and Leu-149. The active site involves Asp-152. Position 227–229 (227–229 (SEE)) interacts with S-adenosyl-L-methionine.

The protein belongs to the class I-like SAM-binding methyltransferase superfamily. TrmB family.

It localises to the nucleus. The catalysed reaction is guanosine(46) in tRNA + S-adenosyl-L-methionine = N(7)-methylguanosine(46) in tRNA + S-adenosyl-L-homocysteine. The protein operates within tRNA modification; N(7)-methylguanine-tRNA biosynthesis. Functionally, catalyzes the formation of N(7)-methylguanine at position 46 (m7G46) in tRNA. The protein is tRNA (guanine-N(7)-)-methyltransferase of Drosophila mojavensis (Fruit fly).